Reading from the N-terminus, the 529-residue chain is Bifunctional purine biosynthesis protein PurH (529 aa).

Residues 1–148 (MNNARPIRRA…KNHKDTTIIV (148 aa)) form the MGS-like domain.

This sequence belongs to the PurH family.

The enzyme catalyses (6R)-10-formyltetrahydrofolate + 5-amino-1-(5-phospho-beta-D-ribosyl)imidazole-4-carboxamide = 5-formamido-1-(5-phospho-D-ribosyl)imidazole-4-carboxamide + (6S)-5,6,7,8-tetrahydrofolate. The catalysed reaction is IMP + H2O = 5-formamido-1-(5-phospho-D-ribosyl)imidazole-4-carboxamide. The protein operates within purine metabolism; IMP biosynthesis via de novo pathway; 5-formamido-1-(5-phospho-D-ribosyl)imidazole-4-carboxamide from 5-amino-1-(5-phospho-D-ribosyl)imidazole-4-carboxamide (10-formyl THF route): step 1/1. It participates in purine metabolism; IMP biosynthesis via de novo pathway; IMP from 5-formamido-1-(5-phospho-D-ribosyl)imidazole-4-carboxamide: step 1/1. The chain is Bifunctional purine biosynthesis protein PurH from Shewanella piezotolerans (strain WP3 / JCM 13877).